A 424-amino-acid polypeptide reads, in one-letter code: MAKNIQAIRGMNDYLPGETAIWQRIEGTLKNVLGSYGYSEIRLPIVEQTPLFKRAIGEVTDVVEKEMYTFEDRNGDSLTLRPEGTAGCVRAGIEHGLLYNQEQRLWYIGPMFRHERPQKGRYRQFHQLGCEVFGLQGPDIDAELIMLTARWWRALGISEHVTLELNSIGSLEARANYRDALVAFLEQHKEKLDEDCKRRMYTNPLRVLDSKNPEVQALLNDAPALGDYLDEESREHFAGLCKLLESAGIAYTVNQRLVRGLDYYNRTVFEWVTNSLGSQGTVCAGGRYDGLVEQLGGRATPAVGFAMGLERLVLLVQAVNPEFKADPVVDIYLVASGADTQSAAMALAERLRDELPGVKLMTNHGGGNFKKQFTRADKWGARVAVVLGESEVANGTAVVKDLRSGEQTAVAQDSVAAHLRTLLG.

It belongs to the class-II aminoacyl-tRNA synthetase family. In terms of assembly, homodimer.

It localises to the cytoplasm. The catalysed reaction is tRNA(His) + L-histidine + ATP = L-histidyl-tRNA(His) + AMP + diphosphate + H(+). This is Histidine--tRNA ligase from Escherichia coli (strain 55989 / EAEC).